Here is a 349-residue protein sequence, read N- to C-terminus: MAEISLRDVRKSYAGIEVIHGVDFEIADGEFVVIVGPSGCGKSTLLRMVAGLEEITAGEIAIGGRVVNRLEPRERDIAMVFQNYALYPHMTVRENMAYGLRIAKLSKAEIEERVARSATMLELGQLLDRKPRQLSGGQRQRVAMGRALVRNPAAFLLDEPLSNLDAKLRVQMRLQIKELQRTVRTTSIYVTHDQVEAMTLADRLVVMNAGVAEQIATPAEIYDRPATTFVAGFIGSPAMNMLPARGLGDALEVAGQRLAVPAPAGRDLILGVRPEHLHAAGPEEPGFELHVQAVEWLGADAFAHGRLADGTELVLRTPGKAPVRERDRLKVAPDAAALHLFDAETGRRL.

The ABC transporter domain occupies 4-234 (ISLRDVRKSY…PATTFVAGFI (231 aa)). 36–43 (GPSGCGKS) contacts ATP.

The protein belongs to the ABC transporter superfamily. sn-glycerol-3-phosphate importer (TC 3.A.1.1.3) family. In terms of assembly, the complex is composed of two ATP-binding proteins (UgpC), two transmembrane proteins (UgpA and UgpE) and a solute-binding protein (UgpB).

The protein resides in the cell inner membrane. It catalyses the reaction sn-glycerol 3-phosphate(out) + ATP + H2O = sn-glycerol 3-phosphate(in) + ADP + phosphate + H(+). Part of the ABC transporter complex UgpBAEC involved in sn-glycerol-3-phosphate (G3P) import. Responsible for energy coupling to the transport system. The polypeptide is sn-glycerol-3-phosphate import ATP-binding protein UgpC (Cereibacter sphaeroides (strain ATCC 17023 / DSM 158 / JCM 6121 / CCUG 31486 / LMG 2827 / NBRC 12203 / NCIMB 8253 / ATH 2.4.1.) (Rhodobacter sphaeroides)).